Consider the following 422-residue polypeptide: Aminopentol aminotransferase (422 aa).

K258 is subject to N6-(pyridoxal phosphate)lysine.

Belongs to the class-III pyridoxal-phosphate-dependent aminotransferase family. It depends on pyridoxal 5'-phosphate as a cofactor.

Its subcellular location is the cytoplasm. The enzyme catalyses (2S,3S,5R,10R,12S,14S,15R,16R)-2-amino-12,16-dimethylicosane-3,5,10,14,15-pentol + pyruvate = (3S,5R,10R,12S,14S,15R,16R)-3,5,10,14,15-pentahydroxy-12,16-dimethylicosan-2-one + L-alanine. Functionally, involved in degradation of fumonisin B1. Catalyzes the deamination of aminopentol (HFB1) to 2-keto-HFB1. Pyruvate is the preferred cosubstrate, but it can also use several other alpha-keto acids as amino group acceptors. The protein is Aminopentol aminotransferase (fumI) of Sphingopyxis macrogoltabida (Sphingomonas macrogoltabidus).